The primary structure comprises 509 residues: NADH dehydrogenase (509 aa).

The segment at 1-183 is membrane-binding; that stretch reads MVLDANIKAQ…YLNGESFGSG (183 aa). A catalytic region spans residues 184 to 509; that stretch reads RMTLEEILAK…LGAFDYLIRN (326 aa). 210–241 contributes to the FAD binding site; sequence DVLVVGGGPAGASAAIYTARKGIRTGVVAERF. Cysteine 337 and cysteine 340 are oxidised to a cystine. An NAD(+)-binding site is contributed by 349–379; that stretch reads DVAVIGGGNSGIEAAIDLAGIVNHVTVLEFA. Residue 469 to 479 coordinates FAD; sequence TSVPGLFAAGD.

This sequence belongs to the class-II pyridine nucleotide-disulfide oxidoreductase family. In terms of assembly, homodimer. Requires FAD as cofactor.

The protein localises to the cell membrane. The enzyme catalyses a ubiquinone + NADH + 5 H(+)(in) = a ubiquinol + NAD(+) + 4 H(+)(out). Functionally, transfer of electrons from NADH to the respiratory chain. The immediate electron acceptor for the enzyme is believed to be ubiquinone. This is NADH dehydrogenase (ahpF) from Bacillus subtilis (strain 168).